We begin with the raw amino-acid sequence, 201 residues long: MALHDENVVWHSHPVTVQQRELHHGHRGVVLWFTGLSGSGKSTVAGALEEALHKLSVSTYLLDGDNVRHGLCSDLGFSDADRKENIRRVGEVANLMVEAGLVVLTAFISPHRAERQMVRERVGEGRFIEVFVDTPLAICEARDPKGLYKKARAGELRNFTGIDSVYEAPESAEIHLNGEQLVTNLVQQLLDLLRQNDIIRS.

Position 35 to 42 (35 to 42) interacts with ATP; sequence GLSGSGKS. Ser109 acts as the Phosphoserine intermediate in catalysis.

The protein belongs to the APS kinase family.

It carries out the reaction adenosine 5'-phosphosulfate + ATP = 3'-phosphoadenylyl sulfate + ADP + H(+). It participates in sulfur metabolism; hydrogen sulfide biosynthesis; sulfite from sulfate: step 2/3. In terms of biological role, catalyzes the synthesis of activated sulfate. This is Adenylyl-sulfate kinase from Shigella flexneri.